The sequence spans 60 residues: U-scutigerotoxin(02)-Tl4a (60 aa).

This sequence belongs to the scutigerotoxin-02 family. In terms of processing, contains 3 disulfide bonds. In terms of tissue distribution, expressed by the venom gland.

Its subcellular location is the secreted. The polypeptide is U-scutigerotoxin(02)-Tl4a (Thereuopoda longicornis (Long-legged centipede)).